We begin with the raw amino-acid sequence, 426 residues long: DNA primase DnaG (426 aa).

One can recognise a Toprim domain in the interval 171 to 245 (DTVILVEGRA…KVDFVARAPP (75 aa)). Mg(2+) contacts are provided by Glu-177, Asp-219, and Asp-221. Residues 407-426 (KSEENIQESVSTGESAQTSP) are disordered. Over residues 413–426 (QESVSTGESAQTSP) the composition is skewed to polar residues.

It belongs to the archaeal DnaG primase family. As to quaternary structure, forms a ternary complex with MCM helicase and DNA. Component of the archaeal exosome complex. It depends on Mg(2+) as a cofactor.

It catalyses the reaction ssDNA + n NTP = ssDNA/pppN(pN)n-1 hybrid + (n-1) diphosphate.. RNA polymerase that catalyzes the synthesis of short RNA molecules used as primers for DNA polymerase during DNA replication. Also part of the exosome, which is a complex involved in RNA degradation. Acts as a poly(A)-binding protein that enhances the interaction between heteromeric, adenine-rich transcripts and the exosome. The polypeptide is DNA primase DnaG (Thermofilum pendens (strain DSM 2475 / Hrk 5)).